Here is a 424-residue protein sequence, read N- to C-terminus: Glucan endo-1,3-alpha-glucosidase agn1 (424 aa).

A signal peptide spans 1–20 (MKLVLFLVLLFSALINLTNA).

The protein belongs to the glycosyl hydrolase 71 family. Monomer. Post-translationally, not glycosylated.

The protein resides in the secreted. The protein localises to the cell wall. The catalysed reaction is Endohydrolysis of (1-&gt;3)-alpha-D-glucosidic linkages in isolichenin, pseudonigeran and nigeran.. Has a role in cell separation where it is required for the degradation of the cell wall material surrounding the septum (the septum edging) which must be hydrolyzed before full separation of the daughter cells can occur. Hydrolyzes 1,3-alpha-glucan predominantly into pentasaccharides. In Schizosaccharomyces pombe (strain 972 / ATCC 24843) (Fission yeast), this protein is Glucan endo-1,3-alpha-glucosidase agn1 (agn1).